The primary structure comprises 287 residues: Acetylglutamate kinase (287 aa).

Residues 64 to 65 (GG), Arg86, and Asn181 contribute to the substrate site.

This sequence belongs to the acetylglutamate kinase family. ArgB subfamily.

It is found in the cytoplasm. The catalysed reaction is N-acetyl-L-glutamate + ATP = N-acetyl-L-glutamyl 5-phosphate + ADP. It functions in the pathway amino-acid biosynthesis; L-arginine biosynthesis; N(2)-acetyl-L-ornithine from L-glutamate: step 2/4. In terms of biological role, catalyzes the ATP-dependent phosphorylation of N-acetyl-L-glutamate. The polypeptide is Acetylglutamate kinase (Desulforamulus reducens (strain ATCC BAA-1160 / DSM 100696 / MI-1) (Desulfotomaculum reducens)).